The following is a 257-amino-acid chain: Aquaporin TIP4-2 (257 aa).

The next 2 helical transmembrane spans lie at 32-52 (LVLTFLFVFTGVSASMAAGAG) and 63-83 (TLAAVAIAHALAAGVLVTAGF). The short motif at 91–93 (NPA) is the NPA 1 element. Transmembrane regions (helical) follow at residues 107 to 127 (LRALLYVAAQLLASSLACILL), 150 to 170 (GLVMEVILTFSLLFVTYAMIL), and 178 to 198 (TIGPLLTGLIVGANSLAGGNF). The short motif at 204 to 206 (NPA) is the NPA 2 element. The chain crosses the membrane as a helical span at residues 225–245 (WIGPLLGGSLAGFVYESLFMV).

Belongs to the MIP/aquaporin (TC 1.A.8) family. TIP (TC 1.A.8.10) subfamily.

It is found in the vacuole membrane. Aquaporins facilitate the transport of water and small neutral solutes across cell membranes. The chain is Aquaporin TIP4-2 (TIP4-2) from Zea mays (Maize).